The sequence spans 258 residues: Snake venom serine proteinase 5 (258 aa).

Positions 1–18 (MVLIRVLANLLILQLSYA) are cleaved as a signal peptide. Residues 19-24 (QKSSEL) constitute a propeptide that is removed on maturation. Residues 25–249 (VVGGDECNIN…YNDWIQSIIA (225 aa)) enclose the Peptidase S1 domain. Intrachain disulfides connect Cys-31-Cys-163, Cys-50-Cys-66, Cys-98-Cys-256, Cys-142-Cys-210, Cys-174-Cys-189, and Cys-200-Cys-225. Residue Asn-44 is glycosylated (N-linked (GlcNAc...) asparagine). Catalysis depends on charge relay system residues His-65 and Asp-110. The active-site Charge relay system is the Ser-204.

Belongs to the peptidase S1 family. Snake venom subfamily. In terms of assembly, monomer. Expressed by the venom gland.

The protein resides in the secreted. Functionally, snake venom serine protease that may act in the hemostasis system of the prey. This is Snake venom serine proteinase 5 from Crotalus adamanteus (Eastern diamondback rattlesnake).